The chain runs to 341 residues: 4-hydroxy-2-oxovalerate aldolase (341 aa).

A Pyruvate carboxyltransferase domain is found at Val-9–Met-259. Residue Arg-17 to Asp-18 participates in substrate binding. Asp-18 serves as a coordination point for Mn(2+). His-21 (proton acceptor) is an active-site residue. The substrate site is built by Ser-171 and His-198. Positions 198 and 200 each coordinate Mn(2+). Tyr-289 contributes to the substrate binding site.

Belongs to the 4-hydroxy-2-oxovalerate aldolase family.

The enzyme catalyses (S)-4-hydroxy-2-oxopentanoate = acetaldehyde + pyruvate. The polypeptide is 4-hydroxy-2-oxovalerate aldolase (Bacillus cereus (strain ATCC 10987 / NRS 248)).